A 473-amino-acid polypeptide reads, in one-letter code: Photosystem II CP43 reaction center protein (473 aa).

Residues 1-14 (MKTLYSLRRFYPVE) constitute a propeptide that is removed on maturation. T15 is modified (N-acetylthreonine). T15 bears the Phosphothreonine mark. The next 5 membrane-spanning stretches (helical) occupy residues 69–93 (LFEVAHFVPEKPMYEQGLILLPHLA), 134–155 (LLGPETLEESFPFFGYVWKDRN), 178–200 (KALYFGGVYDTWAPGGGDVRKIT), 255–275 (KPFAWARRALVWSGEAYLSYS), and 291–312 (WFNNTAYPSEFYGPTGPEASQA). Residue E367 participates in [CaMn4O5] cluster binding. A helical membrane pass occupies residues 447–471 (RARAAAAGFEKGIDRDFEPVLSMTP).

The protein belongs to the PsbB/PsbC family. PsbC subfamily. As to quaternary structure, PSII is composed of 1 copy each of membrane proteins PsbA, PsbB, PsbC, PsbD, PsbE, PsbF, PsbH, PsbI, PsbJ, PsbK, PsbL, PsbM, PsbT, PsbX, PsbY, PsbZ, Psb30/Ycf12, at least 3 peripheral proteins of the oxygen-evolving complex and a large number of cofactors. It forms dimeric complexes. It depends on Binds multiple chlorophylls and provides some of the ligands for the Ca-4Mn-5O cluster of the oxygen-evolving complex. It may also provide a ligand for a Cl- that is required for oxygen evolution. PSII binds additional chlorophylls, carotenoids and specific lipids. as a cofactor.

Its subcellular location is the plastid. It is found in the chloroplast thylakoid membrane. In terms of biological role, one of the components of the core complex of photosystem II (PSII). It binds chlorophyll and helps catalyze the primary light-induced photochemical processes of PSII. PSII is a light-driven water:plastoquinone oxidoreductase, using light energy to abstract electrons from H(2)O, generating O(2) and a proton gradient subsequently used for ATP formation. The protein is Photosystem II CP43 reaction center protein of Buxus microphylla (Littleleaf boxwood).